The following is a 339-amino-acid chain: Flap endonuclease 1 (339 aa).

The interval 1–99 (MGVNLKEIVD…VAWEKRKKHK (99 aa)) is N-domain. Mg(2+) is bound by residues aspartate 29, aspartate 81, glutamate 153, glutamate 155, aspartate 174, aspartate 176, and aspartate 237. An I-domain region spans residues 117–258 (EAIKYAKSLG…TAIEIVKRFG (142 aa)). Positions 329-337 (NQKTLFSFF) are interaction with PCNA.

This sequence belongs to the XPG/RAD2 endonuclease family. FEN1 subfamily. In terms of assembly, interacts with PCNA. PCNA stimulates the nuclease activity without altering cleavage specificity. Mg(2+) serves as cofactor.

Functionally, structure-specific nuclease with 5'-flap endonuclease and 5'-3' exonuclease activities involved in DNA replication and repair. During DNA replication, cleaves the 5'-overhanging flap structure that is generated by displacement synthesis when DNA polymerase encounters the 5'-end of a downstream Okazaki fragment. Binds the unpaired 3'-DNA end and kinks the DNA to facilitate 5' cleavage specificity. Cleaves one nucleotide into the double-stranded DNA from the junction in flap DNA, leaving a nick for ligation. Also involved in the base excision repair (BER) pathway. Acts as a genome stabilization factor that prevents flaps from equilibrating into structures that lead to duplications and deletions. Also possesses 5'-3' exonuclease activity on nicked or gapped double-stranded DNA. This chain is Flap endonuclease 1, found in Nanoarchaeum equitans (strain Kin4-M).